Here is a 94-residue protein sequence, read N- to C-terminus: Small ribosomal subunit protein bS20 (94 aa).

This sequence belongs to the bacterial ribosomal protein bS20 family.

In terms of biological role, binds directly to 16S ribosomal RNA. In Aquifex aeolicus (strain VF5), this protein is Small ribosomal subunit protein bS20.